Here is a 288-residue protein sequence, read N- to C-terminus: Structure-specific endonuclease subunit SLX1 (288 aa).

The GIY-YIG domain occupies 10–93 (DFYCSYLLRS…QHSYKTRFIE (84 aa)). An SLX1-type zinc finger spans residues 209 to 265 (CMICDKKIDYIHDEGTQMVGFCSDDECDFLSCLSCLYKEFTKNSKQIIPKSGHCPNC).

This sequence belongs to the SLX1 family. In terms of assembly, forms a heterodimer with SLX4. It depends on a divalent metal cation as a cofactor.

The protein resides in the nucleus. Functionally, catalytic subunit of the SLX1-SLX4 structure-specific endonuclease that resolves DNA secondary structures generated during DNA repair and recombination. Has endonuclease activity towards branched DNA substrates, introducing single-strand cuts in duplex DNA close to junctions with ss-DNA. This chain is Structure-specific endonuclease subunit SLX1, found in Kluyveromyces lactis (strain ATCC 8585 / CBS 2359 / DSM 70799 / NBRC 1267 / NRRL Y-1140 / WM37) (Yeast).